The following is a 466-amino-acid chain: Asparagine--tRNA ligase (466 aa).

This sequence belongs to the class-II aminoacyl-tRNA synthetase family. Homodimer.

It localises to the cytoplasm. The catalysed reaction is tRNA(Asn) + L-asparagine + ATP = L-asparaginyl-tRNA(Asn) + AMP + diphosphate + H(+). The polypeptide is Asparagine--tRNA ligase (Buchnera aphidicola subsp. Schizaphis graminum (strain Sg)).